A 225-amino-acid chain; its full sequence is Sodium-dependent neutral amino acid transporter SLC6A17 (225 aa).

The next 3 membrane-spanning stretches (helical) occupy residues 1 to 8 (NVWRFPYL), 16 to 35 (AYLVPYLVLLIIIGIPLFFL), and 60 to 80 (GIGFSSCIVCLFVGLYYNVII). The Extracellular portion of the chain corresponds to 81-143 (GWSIFYFFKS…NSISESGGLN (63 aa)). A glycan (N-linked (GlcNAc...) asparagine) is linked at N105. Transmembrane regions (helical) follow at residues 144 to 162 (WKMTLCLLVAWRIVGMAVV), 171 to 188 (VMYFSSLFPYVVLACFLV), and 224 to 225 (IF).

It belongs to the sodium:neurotransmitter symporter (SNF) (TC 2.A.22) family.

It is found in the cytoplasmic vesicle. It localises to the secretory vesicle. The protein localises to the synaptic vesicle membrane. Its subcellular location is the postsynapse. The protein resides in the presynapse. It carries out the reaction L-proline(in) + Na(+)(in) = L-proline(out) + Na(+)(out). It catalyses the reaction L-leucine(in) + Na(+)(in) = L-leucine(out) + Na(+)(out). The catalysed reaction is glycine(in) + Na(+)(in) = glycine(out) + Na(+)(out). The enzyme catalyses L-alanine(in) + Na(+)(in) = L-alanine(out) + Na(+)(out). It carries out the reaction L-glutamine(in) + Na(+)(in) = L-glutamine(out) + Na(+)(out). Functionally, synaptic vesicle transporter with apparent selectivity for neutral amino acids. The transport is sodium-coupled but chloride-independent, likely driven by the proton electrochemical gradient generated by vacuolar H(+)-ATPase in an overall electrogenic mechanism. May contribute to the synaptic uptake of neurotransmitter precursors in a process coupled in part to vesicle exocytosis. This chain is Sodium-dependent neutral amino acid transporter SLC6A17, found in Bos taurus (Bovine).